Here is a 203-residue protein sequence, read N- to C-terminus: Glycerol-3-phosphate acyltransferase (203 aa).

The next 5 helical transmembrane spans lie at 5–25 (VLGL…FGVV), 55–75 (KLGI…ILVA), 88–108 (FTVL…WLGF), 114–134 (VATG…AGAV), and 162–182 (FVAH…AALI).

It belongs to the PlsY family. As to quaternary structure, probably interacts with PlsX.

It localises to the cell inner membrane. It catalyses the reaction an acyl phosphate + sn-glycerol 3-phosphate = a 1-acyl-sn-glycero-3-phosphate + phosphate. It functions in the pathway lipid metabolism; phospholipid metabolism. In terms of biological role, catalyzes the transfer of an acyl group from acyl-phosphate (acyl-PO(4)) to glycerol-3-phosphate (G3P) to form lysophosphatidic acid (LPA). This enzyme utilizes acyl-phosphate as fatty acyl donor, but not acyl-CoA or acyl-ACP. This is Glycerol-3-phosphate acyltransferase from Anaeromyxobacter sp. (strain Fw109-5).